Consider the following 140-residue polypeptide: Gonadotropin subunit beta-2 (140 aa).

Positions 1–23 (MGTPVKILVVLFSVIVLLAVAQS) are cleaved as a signal peptide. Intrachain disulfides connect Cys-29–Cys-77, Cys-43–Cys-92, Cys-46–Cys-130, Cys-54–Cys-108, Cys-58–Cys-110, and Cys-113–Cys-120. N-linked (GlcNAc...) asparagine glycosylation is present at Asn-33.

It belongs to the glycoprotein hormones subunit beta family. As to quaternary structure, heterodimer of an alpha and a beta chain.

Its subcellular location is the secreted. Involved in gametogenesis and steroidogenesis. This Carassius auratus (Goldfish) protein is Gonadotropin subunit beta-2 (cgbb).